Consider the following 661-residue polypeptide: UvrABC system protein B (661 aa).

The 390-residue stretch at 25-414 folds into the Helicase ATP-binding domain; that stretch reads AGLNSKKRSQ…DTVVELIIRP (390 aa). 38–45 is a binding site for ATP; the sequence is GITGSGKT. The Beta-hairpin motif lies at 91-114; the sequence is YYDYYQPEAYIARTDTFIEKDSSI. A Helicase C-terminal domain is found at 430–592; the sequence is QVEDLIGEIQ…IIPKTINRAI (163 aa). The region spanning 621 to 656 is the UVR domain; the sequence is KAHIEKLKKDMLKAASNLEFEQAAKLRDQLKTLEEA.

Belongs to the UvrB family. As to quaternary structure, forms a heterotetramer with UvrA during the search for lesions. Interacts with UvrC in an incision complex.

The protein resides in the cytoplasm. The UvrABC repair system catalyzes the recognition and processing of DNA lesions. A damage recognition complex composed of 2 UvrA and 2 UvrB subunits scans DNA for abnormalities. Upon binding of the UvrA(2)B(2) complex to a putative damaged site, the DNA wraps around one UvrB monomer. DNA wrap is dependent on ATP binding by UvrB and probably causes local melting of the DNA helix, facilitating insertion of UvrB beta-hairpin between the DNA strands. Then UvrB probes one DNA strand for the presence of a lesion. If a lesion is found the UvrA subunits dissociate and the UvrB-DNA preincision complex is formed. This complex is subsequently bound by UvrC and the second UvrB is released. If no lesion is found, the DNA wraps around the other UvrB subunit that will check the other stand for damage. This Rickettsia felis (strain ATCC VR-1525 / URRWXCal2) (Rickettsia azadi) protein is UvrABC system protein B.